Reading from the N-terminus, the 356-residue chain is Histidinol-phosphate aminotransferase (356 aa).

An N6-(pyridoxal phosphate)lysine modification is found at Lys-214.

The protein belongs to the class-II pyridoxal-phosphate-dependent aminotransferase family. Histidinol-phosphate aminotransferase subfamily. In terms of assembly, homodimer. Pyridoxal 5'-phosphate serves as cofactor.

It catalyses the reaction L-histidinol phosphate + 2-oxoglutarate = 3-(imidazol-4-yl)-2-oxopropyl phosphate + L-glutamate. Its pathway is amino-acid biosynthesis; L-histidine biosynthesis; L-histidine from 5-phospho-alpha-D-ribose 1-diphosphate: step 7/9. This is Histidinol-phosphate aminotransferase from Escherichia fergusonii (strain ATCC 35469 / DSM 13698 / CCUG 18766 / IAM 14443 / JCM 21226 / LMG 7866 / NBRC 102419 / NCTC 12128 / CDC 0568-73).